A 465-amino-acid chain; its full sequence is tRNA-2-methylthio-N(6)-dimethylallyladenosine synthase (465 aa).

Residues 18–136 (RKLYIETYGC…LPNLVGAAEQ (119 aa)) form the MTTase N-terminal domain. Cys-27, Cys-63, Cys-100, Cys-174, Cys-178, and Cys-181 together coordinate [4Fe-4S] cluster. The Radical SAM core domain occupies 160–392 (GGVHINGFVS…IALQNRLSEE (233 aa)). Positions 395–458 (KRDISKTFEV…SATLFGEVVE (64 aa)) constitute a TRAM domain.

The protein belongs to the methylthiotransferase family. MiaB subfamily. As to quaternary structure, monomer. [4Fe-4S] cluster is required as a cofactor.

It is found in the cytoplasm. It catalyses the reaction N(6)-dimethylallyladenosine(37) in tRNA + (sulfur carrier)-SH + AH2 + 2 S-adenosyl-L-methionine = 2-methylsulfanyl-N(6)-dimethylallyladenosine(37) in tRNA + (sulfur carrier)-H + 5'-deoxyadenosine + L-methionine + A + S-adenosyl-L-homocysteine + 2 H(+). Its function is as follows. Catalyzes the methylthiolation of N6-(dimethylallyl)adenosine (i(6)A), leading to the formation of 2-methylthio-N6-(dimethylallyl)adenosine (ms(2)i(6)A) at position 37 in tRNAs that read codons beginning with uridine. This is tRNA-2-methylthio-N(6)-dimethylallyladenosine synthase from Porphyromonas gingivalis (strain ATCC 33277 / DSM 20709 / CIP 103683 / JCM 12257 / NCTC 11834 / 2561).